Consider the following 267-residue polypeptide: Undecaprenyl-diphosphatase (267 aa).

The next 7 membrane-spanning stretches (helical) occupy residues 1 to 21, 40 to 60, 85 to 105, 112 to 132, 188 to 208, 219 to 239, and 245 to 265; these read MPLL…FLPV, GQAI…LFFW, LALG…FLYF, LRSV…LYIA, IAML…GTEV, DMGI…ALMM, and VSFT…LFIA.

Belongs to the UppP family.

It is found in the cell inner membrane. It catalyses the reaction di-trans,octa-cis-undecaprenyl diphosphate + H2O = di-trans,octa-cis-undecaprenyl phosphate + phosphate + H(+). Its function is as follows. Catalyzes the dephosphorylation of undecaprenyl diphosphate (UPP). Confers resistance to bacitracin. The chain is Undecaprenyl-diphosphatase from Ruegeria sp. (strain TM1040) (Silicibacter sp.).